A 367-amino-acid polypeptide reads, in one-letter code: Oleoyl-acyl carrier protein thioesterase 2, chloroplastic (367 aa).

Residues 1–48 (MLKLSCNVTDHIHNLFSNSRRIFVPVHRQTRPISCFQLKKEPLRAILS) constitute a chloroplast transit peptide. Residues N263, H265, and C300 contribute to the active site.

Belongs to the acyl-ACP thioesterase family.

It localises to the plastid. The protein localises to the chloroplast. It catalyses the reaction (9Z)-octadecenoyl-[ACP] + H2O = (9Z)-octadecenoate + holo-[ACP] + H(+). Plays an essential role in chain termination during de novo fatty acid synthesis. Possesses high thioesterase activity for oleoyl-ACP versus other acyl-ACPs. This Arabidopsis thaliana (Mouse-ear cress) protein is Oleoyl-acyl carrier protein thioesterase 2, chloroplastic (FATA2).